The sequence spans 194 residues: HTH-type transcriptional regulator BetI (194 aa).

The HTH tetR-type domain occupies 8-68; the sequence is PLRRRELIDA…ATMRHLLREL (61 aa). Positions 31–50 form a DNA-binding region, H-T-H motif; it reads TVAQIAHEAGVSPALAHHYF.

Its pathway is amine and polyamine biosynthesis; betaine biosynthesis via choline pathway [regulation]. Functionally, repressor involved in the biosynthesis of the osmoprotectant glycine betaine. It represses transcription of the choline transporter BetT and the genes of BetAB involved in the synthesis of glycine betaine. The chain is HTH-type transcriptional regulator BetI from Brucella anthropi (strain ATCC 49188 / DSM 6882 / CCUG 24695 / JCM 21032 / LMG 3331 / NBRC 15819 / NCTC 12168 / Alc 37) (Ochrobactrum anthropi).